A 352-amino-acid polypeptide reads, in one-letter code: Protein RecA (352 aa).

67–74 contacts ATP; that stretch reads GPESSGKT.

It belongs to the RecA family.

The protein localises to the cytoplasm. In terms of biological role, can catalyze the hydrolysis of ATP in the presence of single-stranded DNA, the ATP-dependent uptake of single-stranded DNA by duplex DNA, and the ATP-dependent hybridization of homologous single-stranded DNAs. It interacts with LexA causing its activation and leading to its autocatalytic cleavage. In Klebsiella pneumoniae subsp. pneumoniae (strain ATCC 700721 / MGH 78578), this protein is Protein RecA.